Here is a 185-residue protein sequence, read N- to C-terminus: Probable chorismate pyruvate-lyase 1 (185 aa).

Residues Arg-68, Leu-106, and Glu-164 each contribute to the substrate site.

The protein belongs to the UbiC family.

The protein resides in the cytoplasm. The enzyme catalyses chorismate = 4-hydroxybenzoate + pyruvate. The protein operates within cofactor biosynthesis; ubiquinone biosynthesis. In terms of biological role, removes the pyruvyl group from chorismate, with concomitant aromatization of the ring, to provide 4-hydroxybenzoate (4HB) for the ubiquinone pathway. This Pseudomonas entomophila (strain L48) protein is Probable chorismate pyruvate-lyase 1.